The following is a 241-amino-acid chain: Ribonuclease PH (241 aa).

Phosphate contacts are provided by residues Arg89 and 127 to 129 (GTR).

Belongs to the RNase PH family. As to quaternary structure, homohexameric ring arranged as a trimer of dimers.

The catalysed reaction is tRNA(n+1) + phosphate = tRNA(n) + a ribonucleoside 5'-diphosphate. Phosphorolytic 3'-5' exoribonuclease that plays an important role in tRNA 3'-end maturation. Removes nucleotide residues following the 3'-CCA terminus of tRNAs; can also add nucleotides to the ends of RNA molecules by using nucleoside diphosphates as substrates, but this may not be physiologically important. Probably plays a role in initiation of 16S rRNA degradation (leading to ribosome degradation) during starvation. This Stenotrophomonas maltophilia (strain K279a) protein is Ribonuclease PH.